The primary structure comprises 824 residues: Dapper 1-B (824 aa).

Disordered stretches follow at residues 1 to 33 (MKPIPAAPEPLGQHQDSPRRKDKGEAESERQRT), 131 to 150 (EEHLETDSRPSSGFYELSDG), and 515 to 534 (HASSSFDERPPLDFKSEGSS). Residues 2 to 343 (KPIPAAPEPL…PVRTNKPRTS (342 aa)) form an interaction with tcf7l1-A region. Positions 16 to 33 (DSPRRKDKGEAESERQRT) are enriched in basic and acidic residues. Residues 84-139 (EEKFLEDNILLLKKQLNCLRKRDAGLLSQLHELDKQINDLRIDVEKTEEHLETDSR) adopt a coiled-coil conformation. Residues 520–530 (FDERPPLDFKS) show a composition bias toward basic and acidic residues. Residues 821 to 824 (MTTV) carry the PDZ-binding motif.

This sequence belongs to the dapper family. As to quaternary structure, interacts with dbf4 and tcf7l1-A. Interacts with dvl2/dsh; the interaction is required for dact1-b phosphorylation by CaMK1D and seems to become disrupted by the phosphorylation. Phosphorylated by CaMK1D; the phosphorylation requires binding to dvl2/dsh. As to expression, expressed both in the dorsal lip in early gastrula and throughout the posterior presumptive ectoderm in early neurula. Expressed in the dorsal neural folds at the tailbud stage and highly expressed in the tadpole head, including the brain, retina and cartilaginous branchial arch derivatives.

It is found in the cytoplasm. It localises to the nucleus. Functionally, involved in regulation of intracellular signaling pathways during development. Specifically thought to play a role in canonical and/or non-canonical Wnt signaling pathways through interaction with DSH (Dishevelled) family proteins. Binds to dvl2 to regulate the degradation of beta-catenin (ctnnb1-A and possibly ctnnb1-B), thereby modulating the transcriptional activation of target genes of the Wnt signaling pathway. Seems to promote beta-catenin degradation if not phosphorylated and to block beta-catenin degradation if phosphorylated by CaMK1D. Involved in regulation of catenin delta/ctnnd1 protein level. May also bind to and directly stimulate the activity of tcf7l1-A. Also regulates the activation by dvl2 of jnk, a component of ctnnb1/beta-catenin-independent frizzled signaling. Required for notochord and head formation. The polypeptide is Dapper 1-B (dact1-b) (Xenopus laevis (African clawed frog)).